The sequence spans 130 residues: Small ribosomal subunit protein uS11 (130 aa).

The segment at 109-130 (EDVTPIPHDGTGRPGGKRGRRV) is disordered.

The protein belongs to the universal ribosomal protein uS11 family. In terms of assembly, part of the 30S ribosomal subunit.

Its function is as follows. Located on the platform of the 30S subunit. The chain is Small ribosomal subunit protein uS11 from Methanosphaera stadtmanae (strain ATCC 43021 / DSM 3091 / JCM 11832 / MCB-3).